The chain runs to 130 residues: Large ribosomal subunit protein bL17 (130 aa).

The protein belongs to the bacterial ribosomal protein bL17 family. Part of the 50S ribosomal subunit. Contacts protein L32.

The chain is Large ribosomal subunit protein bL17 from Shewanella halifaxensis (strain HAW-EB4).